Consider the following 293-residue polypeptide: Homoserine kinase (293 aa).

84 to 94 (PLSRGLGSSSA) serves as a coordination point for ATP.

It belongs to the GHMP kinase family. Homoserine kinase subfamily.

It is found in the cytoplasm. It catalyses the reaction L-homoserine + ATP = O-phospho-L-homoserine + ADP + H(+). It functions in the pathway amino-acid biosynthesis; L-threonine biosynthesis; L-threonine from L-aspartate: step 4/5. Functionally, catalyzes the ATP-dependent phosphorylation of L-homoserine to L-homoserine phosphate. In Aliarcobacter butzleri (strain RM4018) (Arcobacter butzleri), this protein is Homoserine kinase.